Consider the following 248-residue polypeptide: Protein GrpE (248 aa).

Residues 229–248 (AAPKEDTLPAQENQSSPADS) are disordered. Residues 238 to 248 (AQENQSSPADS) are compositionally biased toward polar residues.

The protein belongs to the GrpE family. As to quaternary structure, homodimer.

The protein localises to the cytoplasm. Participates actively in the response to hyperosmotic and heat shock by preventing the aggregation of stress-denatured proteins, in association with DnaK and GrpE. It is the nucleotide exchange factor for DnaK and may function as a thermosensor. Unfolded proteins bind initially to DnaJ; upon interaction with the DnaJ-bound protein, DnaK hydrolyzes its bound ATP, resulting in the formation of a stable complex. GrpE releases ADP from DnaK; ATP binding to DnaK triggers the release of the substrate protein, thus completing the reaction cycle. Several rounds of ATP-dependent interactions between DnaJ, DnaK and GrpE are required for fully efficient folding. This chain is Protein GrpE, found in Nostoc sp. (strain PCC 7120 / SAG 25.82 / UTEX 2576).